The following is a 198-amino-acid chain: NADH-quinone oxidoreductase subunit I (198 aa).

4Fe-4S ferredoxin-type domains are found at residues 42 to 72 (LNRWPDGLEKCVGCELCAWACPADAIYVEGA) and 88 to 117 (RVYEINYLRCILCGMCIEACPTRALTMTND). 8 residues coordinate [4Fe-4S] cluster: Cys-52, Cys-55, Cys-58, Cys-62, Cys-97, Cys-100, Cys-103, and Cys-107. The interval 137–198 (APLKEGMEQP…DTQHKDEEAA (62 aa)) is disordered. Positions 182–198 (AHRDDDNDTQHKDEEAA) are enriched in basic and acidic residues.

This sequence belongs to the complex I 23 kDa subunit family. As to quaternary structure, NDH-1 is composed of 14 different subunits. Subunits NuoA, H, J, K, L, M, N constitute the membrane sector of the complex. Requires [4Fe-4S] cluster as cofactor.

It is found in the cell membrane. The enzyme catalyses a quinone + NADH + 5 H(+)(in) = a quinol + NAD(+) + 4 H(+)(out). Its function is as follows. NDH-1 shuttles electrons from NADH, via FMN and iron-sulfur (Fe-S) centers, to quinones in the respiratory chain. The immediate electron acceptor for the enzyme in this species is believed to be ubiquinone. Couples the redox reaction to proton translocation (for every two electrons transferred, four hydrogen ions are translocated across the cytoplasmic membrane), and thus conserves the redox energy in a proton gradient. The chain is NADH-quinone oxidoreductase subunit I from Cutibacterium acnes (strain DSM 16379 / KPA171202) (Propionibacterium acnes).